The following is a 544-amino-acid chain: Chaperonin GroEL (544 aa).

ATP contacts are provided by residues 30–33 (TLGP), K51, 87–91 (DGTTT), G415, 479–481 (NAA), and D495.

This sequence belongs to the chaperonin (HSP60) family. As to quaternary structure, forms a cylinder of 14 subunits composed of two heptameric rings stacked back-to-back. Interacts with the co-chaperonin GroES.

It is found in the cytoplasm. It catalyses the reaction ATP + H2O + a folded polypeptide = ADP + phosphate + an unfolded polypeptide.. Its function is as follows. Together with its co-chaperonin GroES, plays an essential role in assisting protein folding. The GroEL-GroES system forms a nano-cage that allows encapsulation of the non-native substrate proteins and provides a physical environment optimized to promote and accelerate protein folding. In Francisella tularensis subsp. holarctica (strain FTNF002-00 / FTA), this protein is Chaperonin GroEL.